The chain runs to 124 residues: Small ribosomal subunit protein uS11 (124 aa).

This sequence belongs to the universal ribosomal protein uS11 family. In terms of assembly, part of the 30S ribosomal subunit.

Its function is as follows. Located on the platform of the 30S subunit. The polypeptide is Small ribosomal subunit protein uS11 (Methanococcus aeolicus (strain ATCC BAA-1280 / DSM 17508 / OCM 812 / Nankai-3)).